The primary structure comprises 28 residues: Aspartate aminotransferase, mitochondrial (28 aa).

It belongs to the class-I pyridoxal-phosphate-dependent aminotransferase family. As to quaternary structure, homodimer. The cofactor is pyridoxal 5'-phosphate.

The protein localises to the mitochondrion matrix. It catalyses the reaction L-aspartate + 2-oxoglutarate = oxaloacetate + L-glutamate. Functionally, plays a key role in amino acid metabolism. Important for metabolite exchange between mitochondria and cytosol. This Catharanthus roseus (Madagascar periwinkle) protein is Aspartate aminotransferase, mitochondrial.